The following is a 206-amino-acid chain: Large ribosomal subunit protein uL4 (206 aa).

The interval 63-97 (MYKQKGTGRARHHSARAPQFRGGGKAHGPVVRSHE) is disordered. Positions 64 to 77 (YKQKGTGRARHHSA) are enriched in basic residues.

The protein belongs to the universal ribosomal protein uL4 family. Part of the 50S ribosomal subunit.

In terms of biological role, one of the primary rRNA binding proteins, this protein initially binds near the 5'-end of the 23S rRNA. It is important during the early stages of 50S assembly. It makes multiple contacts with different domains of the 23S rRNA in the assembled 50S subunit and ribosome. Functionally, forms part of the polypeptide exit tunnel. This chain is Large ribosomal subunit protein uL4, found in Rhizobium leguminosarum bv. trifolii (strain WSM2304).